The following is a 236-amino-acid chain: Ribose-5-phosphate isomerase (236 aa).

Substrate-binding positions include 27-30 (TGST), 84-87 (DGTD), and 97-100 (KGRG). The active-site Proton acceptor is Glu106. Lys124 is a binding site for substrate.

This sequence belongs to the ribose 5-phosphate isomerase family. Homodimer.

It carries out the reaction aldehydo-D-ribose 5-phosphate = D-ribulose 5-phosphate. It participates in carbohydrate degradation; pentose phosphate pathway; D-ribose 5-phosphate from D-ribulose 5-phosphate (non-oxidative stage): step 1/1. Its function is as follows. Involved in the first step of the non-oxidative branch of the pentose phosphate pathway. It catalyzes the reversible conversion of ribose-5-phosphate to ribulose 5-phosphate. In Plasmodium falciparum (isolate 3D7), this protein is Ribose-5-phosphate isomerase.